The chain runs to 282 residues: Interferon-inducible double-stranded RNA-dependent protein kinase activator A homolog (282 aa).

DRBM domains lie at 10–77 (TPIQ…LLKR), 99–167 (NPVG…KLQS), and 209–277 (DYIQ…YIKM).

It belongs to the PRKRA family. Homodimer. Interacts with dicer1 and eif2ak2/pkr. Also able to interact with dsRNA.

It localises to the cytoplasm. The protein resides in the perinuclear region. In terms of biological role, activates eif2ak2/pkr in the absence of double-stranded RNA (dsRNA), leading to phosphorylation of eif2s1/efi2-alpha and inhibition of translation and induction of apoptosis. Required for siRNA production by dicer1 and for subsequent siRNA-mediated post-transcriptional gene silencing. Does not seem to be required for processing of pre-miRNA to miRNA by dicer1. This chain is Interferon-inducible double-stranded RNA-dependent protein kinase activator A homolog (prkra), found in Danio rerio (Zebrafish).